We begin with the raw amino-acid sequence, 465 residues long: Chromosomal replication initiator protein DnaA (465 aa).

The interval 1-72 (MRTKQLWQVA…ETLSLLLGRP (72 aa)) is domain I, interacts with DnaA modulators. Residues 72-117 (PIAVHFTVHGQDDEEHPVQRRPQRRALASEEGSASKQLSLTPSPEH) are domain II. The tract at residues 80–118 (HGQDDEEHPVQRRPQRRALASEEGSASKQLSLTPSPEHG) is disordered. The span at 103–113 (GSASKQLSLTP) shows a compositional bias: polar residues. The tract at residues 118-334 (GLNPRYTFEK…GALNRIVALA (217 aa)) is domain III, AAA+ region. Residues glycine 162, glycine 164, lysine 165, and threonine 166 each contribute to the ATP site. A domain IV, binds dsDNA region spans residues 335-465 (QLTHQPITLA…DAKAPLASRH (131 aa)).

Belongs to the DnaA family. Oligomerizes as a right-handed, spiral filament on DNA at oriC.

The protein resides in the cytoplasm. Plays an essential role in the initiation and regulation of chromosomal replication. ATP-DnaA binds to the origin of replication (oriC) to initiate formation of the DNA replication initiation complex once per cell cycle. Binds the DnaA box (a 9 base pair repeat at the origin) and separates the double-stranded (ds)DNA. Forms a right-handed helical filament on oriC DNA; dsDNA binds to the exterior of the filament while single-stranded (ss)DNA is stabiized in the filament's interior. The ATP-DnaA-oriC complex binds and stabilizes one strand of the AT-rich DNA unwinding element (DUE), permitting loading of DNA polymerase. After initiation quickly degrades to an ADP-DnaA complex that is not apt for DNA replication. Binds acidic phospholipids. This chain is Chromosomal replication initiator protein DnaA, found in Thermomicrobium roseum (strain ATCC 27502 / DSM 5159 / P-2).